The primary structure comprises 321 residues: Coproporphyrin III ferrochelatase (321 aa).

The Fe(2+) site is built by histidine 185 and glutamate 267.

This sequence belongs to the ferrochelatase family.

It is found in the cytoplasm. It carries out the reaction Fe-coproporphyrin III + 2 H(+) = coproporphyrin III + Fe(2+). Its pathway is porphyrin-containing compound metabolism; protoheme biosynthesis. In terms of biological role, involved in coproporphyrin-dependent heme b biosynthesis. Catalyzes the insertion of ferrous iron into coproporphyrin III to form Fe-coproporphyrin III. The sequence is that of Coproporphyrin III ferrochelatase from Lacticaseibacillus casei (strain BL23) (Lactobacillus casei).